The sequence spans 83 residues: MSKTQINLQDAFLNQLRKENIPVTIFLVNGFQLKGAVRGFDNFTVILESDGKQLMVYKHAISTVSPSRPVNTSATPEHRNVGQ.

Residues aspartate 10–valine 70 form the Sm domain.

This sequence belongs to the Hfq family. In terms of assembly, homohexamer.

Functionally, RNA chaperone that binds small regulatory RNA (sRNAs) and mRNAs to facilitate mRNA translational regulation in response to envelope stress, environmental stress and changes in metabolite concentrations. Also binds with high specificity to tRNAs. The protein is RNA-binding protein Hfq of Desulforudis audaxviator (strain MP104C).